An 870-amino-acid chain; its full sequence is Leucine--tRNA ligase (870 aa).

Residues 42–52 (PYPSGKLHMGH) carry the 'HIGH' region motif. The short motif at 629 to 633 (KMSKS) is the 'KMSKS' region element. Residue Lys-632 participates in ATP binding.

It belongs to the class-I aminoacyl-tRNA synthetase family.

It is found in the cytoplasm. The catalysed reaction is tRNA(Leu) + L-leucine + ATP = L-leucyl-tRNA(Leu) + AMP + diphosphate. This Dechloromonas aromatica (strain RCB) protein is Leucine--tRNA ligase.